We begin with the raw amino-acid sequence, 374 residues long: Ras-related GTP-binding protein B (374 aa).

Met-1 is subject to N-acetylmethionine. Residues Met-1–Val-15 are compositionally biased toward basic and acidic residues. Residues Met-1–Leu-30 are disordered. The GTP site is built by Ser-49 and Gly-50. Residues Gly-50, Ser-51, Gly-52, Lys-53, Thr-54, Ser-55, Thr-69, and Thr-75 each contribute to the GDP site. 8 residues coordinate GTP: Gly-52, Lys-53, Thr-54, Ser-55, Thr-69, Thr-75, Gly-126, and His-188. Residues His-188 and Asp-191 each contribute to the GDP site. Lys-203 participates in a covalent cross-link: Glycyl lysine isopeptide (Lys-Gly) (interchain with G-Cter in ubiquitin). Residues Leu-209 and Ile-225 each contribute to the GDP site. Residue Ile-225 participates in GTP binding. Glycyl lysine isopeptide (Lys-Gly) (interchain with G-Cter in ubiquitin) cross-links involve residues Lys-281, Lys-291, and Lys-305.

Belongs to the GTR/RAG GTP-binding protein family. Interacts with RRAGC and RRAGD; heterodimerization stabilizes RRAG proteins. The GTP-bound form of RRAGB (in complex with the GDP-bound form of RRAGC or RRAGD) interacts with RPTOR, thereby promoting recruitment of mTORC1 to the lysosomes. Component of the lysosomal folliculin complex (LFC), composed of FLCN, FNIP1 (or FNIP2), RagA/RRAGA or RagB/RRAGB GDP-bound, RagC/RRAGC or RagD/RRAGD GTP-bound, and Ragulator. Interacts with SH3BP4; the interaction with this negative regulator is most probably direct, preferentially occurs with the inactive GDP-bound form of RRAGB, is negatively regulated by amino acids and prevents interaction with RPTOR. Interacts with the GATOR1 complex; inactivates RRAGB. The Rag heterodimer interacts with SLC38A9; the probable amino acid sensor. Interacts with SESN1, SESN2 and SESN3.

Its subcellular location is the cytoplasm. It localises to the lysosome membrane. It carries out the reaction GTP + H2O = GDP + phosphate + H(+). Its activity is regulated as follows. The activation of GTP-binding proteins is generally mediated by a guanine exchange factor (GEF), while inactivation through hydrolysis of bound GTP is catalyzed by a GTPase activating protein (GAP). The Ragulator complex functions as a GEF and promotes the active GTP-bound form. The GATOR1 complex functions as a GAP and stimulates RRAGB GTPase activity to turn it into its inactive GDP-bound form, preventing mTORC1 recruitment and activation. Its function is as follows. Guanine nucleotide-binding protein that plays a crucial role in the cellular response to amino acid availability through regulation of the mTORC1 signaling cascade. Forms heterodimeric Rag complexes with RagC/RRAGC or RagD/RRAGD and cycles between an inactive GDP-bound and an active GTP-bound form: RagB/RRAGB is in its active form when GTP-bound RagB/RRAGB forms a complex with GDP-bound RagC/RRAGC (or RagD/RRAGD) and in an inactive form when GDP-bound RagB/RRAGB heterodimerizes with GTP-bound RagC/RRAGC (or RagD/RRAGD). In its GTP-bound active form, promotes the recruitment of mTORC1 to the lysosomes and its subsequent activation by the GTPase RHEB. Involved in the RCC1/Ran-GTPase pathway. This Mus musculus (Mouse) protein is Ras-related GTP-binding protein B.